A 415-amino-acid chain; its full sequence is Serine hydroxymethyltransferase 1 (415 aa).

Residues Leu117 and 121 to 123 each bind (6S)-5,6,7,8-tetrahydrofolate; that span reads GHL. An N6-(pyridoxal phosphate)lysine modification is found at Lys225. Residue 349–351 coordinates (6S)-5,6,7,8-tetrahydrofolate; sequence SPF.

Belongs to the SHMT family. Homodimer. It depends on pyridoxal 5'-phosphate as a cofactor.

It is found in the cytoplasm. The catalysed reaction is (6R)-5,10-methylene-5,6,7,8-tetrahydrofolate + glycine + H2O = (6S)-5,6,7,8-tetrahydrofolate + L-serine. It participates in one-carbon metabolism; tetrahydrofolate interconversion. It functions in the pathway amino-acid biosynthesis; glycine biosynthesis; glycine from L-serine: step 1/1. In terms of biological role, catalyzes the reversible interconversion of serine and glycine with tetrahydrofolate (THF) serving as the one-carbon carrier. This reaction serves as the major source of one-carbon groups required for the biosynthesis of purines, thymidylate, methionine, and other important biomolecules. Also exhibits THF-independent aldolase activity toward beta-hydroxyamino acids, producing glycine and aldehydes, via a retro-aldol mechanism. This chain is Serine hydroxymethyltransferase 1, found in Sulfurimonas denitrificans (strain ATCC 33889 / DSM 1251) (Thiomicrospira denitrificans (strain ATCC 33889 / DSM 1251)).